Consider the following 688-residue polypeptide: DNA-directed RNA polymerase subunit beta' (688 aa).

Residues Cys-69, Cys-71, Cys-87, and Cys-90 each coordinate Zn(2+). Residues Asp-493, Asp-495, and Asp-497 each contribute to the Mg(2+) site.

It belongs to the RNA polymerase beta' chain family. RpoC1 subfamily. In terms of assembly, in plastids the minimal PEP RNA polymerase catalytic core is composed of four subunits: alpha, beta, beta', and beta''. When a (nuclear-encoded) sigma factor is associated with the core the holoenzyme is formed, which can initiate transcription. Mg(2+) is required as a cofactor. It depends on Zn(2+) as a cofactor.

Its subcellular location is the plastid. The protein resides in the chloroplast. The enzyme catalyses RNA(n) + a ribonucleoside 5'-triphosphate = RNA(n+1) + diphosphate. DNA-dependent RNA polymerase catalyzes the transcription of DNA into RNA using the four ribonucleoside triphosphates as substrates. The chain is DNA-directed RNA polymerase subunit beta' from Chloranthus spicatus (Chulantree).